Reading from the N-terminus, the 813-residue chain is MSQDPFQEREAEKYANPIPSREFILEHLTKREKPASRDELAVELHIEGEEQLEGLRRRLRAMERDGQLVFTRRQCYALPERLDLVKGTVIGHRDGYGFLRVEGRKDDLYLSSEQMKTCIHGDQVLAQPLGADRKGRREARIVRVLVPKTSQIVGRYFTEAGVGFVVPDDSRLSFDILIPPDQIMGARMGFVVVVELTQRPTRRTKAVGKIVEVLGDNMGTGMAVDIALRTHEIPYIWPQAVEQQVAGLKEEVPEEAKAGRVDLRDLPLVTIDGEDARDFDDAVYCEKKRGGGWRLWVAIADVSYYVRPPTPLDREARNRGTSVYFPSQVIPMLPEVLSNGLCSLNPQVDRLCMVCEMTVSSKGRLTGYKFYEAVMSSHARLTYTKVWHILQGDQDLREQYAPLVKHLEELHNLYKVLDKAREERGGISFESEEAKFIFNAERRIERIEQTQRNDAHKLIEECMILANISAARFVEKAKEPALFRIHDKPSTEAITSFRSVLAELGLELPGGNKPEPRDYAELLESVADRPDAEMLQTMLLRSMKQAIYDPENRGHFGLALQSYAHFTSPIRRYPDLTLHRAIKYLLAKEQGHQGNTTETGGYHYSMEEMLQLGQHCSMAERRADEATRDVADWLKCDFMLDQVGNVFKGVISSVTGFGFFVRLDDLFIDGLVHVSSLDNDYYRFDQVGQRLMGESSGQTYRLGDRVEVRVEAVNMDERKIDFSLISSERAPRNVGKTAREKAKKGDAGKKGGKRCQVGKKVNFEPDSAFRGEKKTKPKAAKKDARKAKKPSAKTQKIAAATKAKRAAKKKVAE.

In terms of domain architecture, RNB spans 260-587 (RVDLRDLPLV…LHRAIKYLLA (328 aa)). Lys544 is subject to N6-acetyllysine. An S1 motif domain is found at 644–725 (GNVFKGVISS…DERKIDFSLI (82 aa)). A disordered region spans residues 733-813 (NVGKTAREKA…KRAAKKKVAE (81 aa)). 2 stretches are compositionally biased toward basic and acidic residues: residues 737–749 (TARE…DAGK) and 761–774 (VNFE…GEKK). The span at 775 to 791 (TKPKAAKKDARKAKKPS) shows a compositional bias: basic residues. Residues 792–801 (AKTQKIAAAT) show a composition bias toward low complexity. Positions 802–813 (KAKRAAKKKVAE) are enriched in basic residues.

It belongs to the RNR ribonuclease family. RNase R subfamily. Monomer.

It localises to the cytoplasm. It carries out the reaction Exonucleolytic cleavage in the 3'- to 5'-direction to yield nucleoside 5'-phosphates.. 3'-5' exoribonuclease that releases 5'-nucleoside monophosphates and is involved in maturation of structured RNAs. Required for the expression of virulence genes on the large plasmid of S.flexneri at the post-transcriptional level. The sequence is that of Ribonuclease R from Shigella flexneri.